The sequence spans 702 residues: Cytolytic toxin-alpha (702 aa).

A structural MACPF/CDC pore-forming domain region spans residues Ser-2–Ser-265. N-linked (GlcNAc...) asparagine glycans are attached at residues Asn-93, Asn-100, Asn-201, Asn-287, and Asn-311. Positions Gln-266–Ala-385 are structural FAT domain. The tract at residues Val-386 to Val-513 is thioredoxin (THX) domain. The 198-residue stretch at Ile-505 to Leu-702 folds into the B30.2/SPRY domain. Asn-530 is a glycosylation site (N-linked (GlcNAc...) asparagine).

It belongs to the SNTX/VTX toxin family. Heterodimer of alpha and beta subunits; non-covalently linked. Also associates into tetramers or even higher aggregates. Post-translationally, intrachain disulfide bonds may be present in the heterodimer. Expressed by the venom gland.

The protein resides in the secreted. Its function is as follows. This heterodimer induces potent hemolytic activities (when tested on rabbit erythrocytes, EC(50)=25-56 ng/mL) due to its ability to form pores in the cell membrane. The pore may be composed of 10 alpha/beta heterodimers. The toxin shows cardiovascular effects that include a vasorelaxant action that may involve the L-arginine-nitric oxid synthase pathway. In addition, it displays edema-inducing activities, increases vascular permeability. It also shows myotoxic activities and interferes irreversibly with neuromuscular function. It also induces irreversible platelet aggregation in rabbit or rat (but not in human or mouse) whole blood. In addition, it has been observed to increase spontaneous quantal acetylcholine release from isolated frog cutaneous pectoris motor endings. The sequence is that of Cytolytic toxin-alpha from Scorpaena plumieri (Spotted scorpionfish).